Reading from the N-terminus, the 258-residue chain is Thiazole synthase (258 aa).

The active-site Schiff-base intermediate with DXP is the K96. 1-deoxy-D-xylulose 5-phosphate-binding positions include G157, 183-184, and 205-206; these read AG and NT.

The protein belongs to the ThiG family. As to quaternary structure, homotetramer. Forms heterodimers with either ThiH or ThiS.

It is found in the cytoplasm. It catalyses the reaction [ThiS sulfur-carrier protein]-C-terminal-Gly-aminoethanethioate + 2-iminoacetate + 1-deoxy-D-xylulose 5-phosphate = [ThiS sulfur-carrier protein]-C-terminal Gly-Gly + 2-[(2R,5Z)-2-carboxy-4-methylthiazol-5(2H)-ylidene]ethyl phosphate + 2 H2O + H(+). Its pathway is cofactor biosynthesis; thiamine diphosphate biosynthesis. Functionally, catalyzes the rearrangement of 1-deoxy-D-xylulose 5-phosphate (DXP) to produce the thiazole phosphate moiety of thiamine. Sulfur is provided by the thiocarboxylate moiety of the carrier protein ThiS. In vitro, sulfur can be provided by H(2)S. This is Thiazole synthase from Alkaliphilus metalliredigens (strain QYMF).